We begin with the raw amino-acid sequence, 582 residues long: tRNA(Ile)-lysidine synthase (582 aa).

Residue 46–51 (SGGADS) coordinates ATP. The 124-residue stretch at 402–525 (DPLHAAMGEA…DLLADHWGWR (124 aa)) folds into the CMP/dCMP-type deaminase domain. The tract at residues 548-582 (VRRRSADTPQTPNAETPAPRSSRSTSASGKPTMLE) is disordered. The segment covering 563–575 (TPAPRSSRSTSAS) has biased composition (low complexity).

This sequence belongs to the tRNA(Ile)-lysidine synthase family.

Its subcellular location is the cytoplasm. The catalysed reaction is cytidine(34) in tRNA(Ile2) + L-lysine + ATP = lysidine(34) in tRNA(Ile2) + AMP + diphosphate + H(+). In terms of biological role, ligates lysine onto the cytidine present at position 34 of the AUA codon-specific tRNA(Ile) that contains the anticodon CAU, in an ATP-dependent manner. Cytidine is converted to lysidine, thus changing the amino acid specificity of the tRNA from methionine to isoleucine. This Deinococcus radiodurans (strain ATCC 13939 / DSM 20539 / JCM 16871 / CCUG 27074 / LMG 4051 / NBRC 15346 / NCIMB 9279 / VKM B-1422 / R1) protein is tRNA(Ile)-lysidine synthase.